A 536-amino-acid polypeptide reads, in one-letter code: MSKEIRYGKDAKQSLLKGVDLLANTVKITLGPKGRNVVLDKGYGSPLITNDGVSIAKEIELKDPYENMGAKLLYEVASKTNDVAGDGTTTATLLAQSIIHKGFKAVDNGANPVLVREGILRAGKEVSQKLLEKSRPVETSEDIENVASISASSREIGKIIAEAMDKVSKNGVISVDESKGFETELEVVEGMQYDKGYISPYFVSDRETMTVELENPHVLVTDQKISTIQDILPILEQVVKANKPLLIIADDIENEVTSTLILNKLRGTFNVVATKAPGFGDNQKDMLNDIAILTGATFYAKDLQMKLQEIKLEDLGLVQKAVVKKDTTTLIGGHGTKDAIDKRILEIEAQINSSTSDYDKKRLQERLAKLAGGVAIIKVGAATEAELKEKKLRIEDALNATKAAILEGIVAGGGSVLVDIQTELKETLKDSHIDIYKGILAVLDSLSEPLYQIAENAGFDGQDILTEQRKQNKNYGFDAKEGKWVNMLKEGIIDPTKVTRNAILNASSIGALMITSEAAVVEIKDKDQNIPTQPMY.

Residues 29–32, 86–90, Gly-413, and Asp-494 each bind ATP; these read TLGP and DGTTT.

The protein belongs to the chaperonin (HSP60) family. As to quaternary structure, forms a cylinder of 14 subunits composed of two heptameric rings stacked back-to-back. Interacts with the co-chaperonin GroES.

Its subcellular location is the cytoplasm. The catalysed reaction is ATP + H2O + a folded polypeptide = ADP + phosphate + an unfolded polypeptide.. Functionally, together with its co-chaperonin GroES, plays an essential role in assisting protein folding. The GroEL-GroES system forms a nano-cage that allows encapsulation of the non-native substrate proteins and provides a physical environment optimized to promote and accelerate protein folding. The protein is Chaperonin GroEL of Acholeplasma laidlawii (strain PG-8A).